We begin with the raw amino-acid sequence, 345 residues long: Beta-2-glycoprotein 1 (345 aa).

Residues 1–19 (MISLGLILFSSVLCHVATA) form the signal peptide. Sushi domains are found at residues 21 to 81 (RTCP…RCIP), 82 to 139 (RVCP…VCTR), 140 to 202 (VTCP…ECRE), and 203 to 262 (VKCP…SCKA). Cystine bridges form between Cys23–Cys66, Cys51–Cys79, Cys84–Cys124, Cys110–Cys137, Cys142–Cys188, Cys174–Cys200, Cys205–Cys248, Cys234–Cys260, Cys264–Cys315, Cys300–Cys325, and Cys307–Cys345. The O-linked (GalNAc...) threonine glycan is linked to Thr33. Asn117, Asn162, Asn183, and Asn193 each carry an N-linked (GlcNAc...) asparagine glycan. Residue Asn253 is glycosylated (N-linked (GlcNAc...) asparagine). The sushi-like stretch occupies residues 263 to 345 (SCKLSVKKAT…KTDASDVKPC (83 aa)).

In terms of tissue distribution, expressed by the liver and secreted in plasma.

Its subcellular location is the secreted. Binds to various kinds of negatively charged substances such as heparin, phospholipids, and dextran sulfate. May prevent activation of the intrinsic blood coagulation cascade by binding to phospholipids on the surface of damaged cells. The protein is Beta-2-glycoprotein 1 (APOH) of Canis lupus familiaris (Dog).